The sequence spans 337 residues: Glutathione transferase 3 (337 aa).

Topologically, residues 1-239 (MPTKSTFSRW…NKYQYTLDFC (239 aa)) are cytoplasmic. Phosphoserine is present on residues Ser66, Ser72, Ser99, and Ser116. The tract at residues 66–95 (SMTVDQSKDERNEYGSGSGNGSGSGSCDTA) is disordered. The interval 107-132 (KEDDDEKPQSGDETSATKPLSSRNAN) is disordered. The segment covering 117 to 132 (GDETSATKPLSSRNAN) has biased composition (polar residues). Residues 240-260 (LPILTWLLFFRGIPTLVSYYI) traverse the membrane as a helical segment. At 261 to 313 (NFIRYDLNIELDPMTFNLTKFLISLAIFKTCNNKNIDFHSFRCVNQLWTQLCT) the chain is on the perinuclear space side. A helical membrane pass occupies residues 314–336 (VNRSLGMVPLVFSMVSCLLTLYV). Leu337 is a topological domain (cytoplasmic).

It is found in the nucleus membrane. The polypeptide is Glutathione transferase 3 (GTT3) (Saccharomyces cerevisiae (strain ATCC 204508 / S288c) (Baker's yeast)).